The following is a 226-amino-acid chain: PKHD-type hydroxylase mma_3620 (226 aa).

Residues Arg78–Ser178 form the Fe2OG dioxygenase domain. Fe cation is bound by residues His96, Asp98, and His159. Arg169 is a binding site for 2-oxoglutarate.

Fe(2+) is required as a cofactor. It depends on L-ascorbate as a cofactor.

This chain is PKHD-type hydroxylase mma_3620, found in Janthinobacterium sp. (strain Marseille) (Minibacterium massiliensis).